The primary structure comprises 439 residues: Xylose isomerase (439 aa).

Residues H101 and D104 contribute to the active site. E232, E268, H271, D296, D307, D309, and D339 together coordinate Mg(2+).

It belongs to the xylose isomerase family. In terms of assembly, homotetramer. It depends on Mg(2+) as a cofactor.

The protein localises to the cytoplasm. It catalyses the reaction alpha-D-xylose = alpha-D-xylulofuranose. This Pseudoalteromonas atlantica (strain T6c / ATCC BAA-1087) protein is Xylose isomerase.